We begin with the raw amino-acid sequence, 165 residues long: Lipoprotein signal peptidase (165 aa).

A run of 4 helical transmembrane segments spans residues 7 to 27 (FFLLLGLIITVLLDQAIKYWI), 28 to 48 (THTMLLGTEIPLFPFISLYHV), 61 to 81 (FSHWGLIALTITIIVFLFWLW), and 87 to 107 (DKALSRFGIVLIIGGAIGNLI). Active-site residues include aspartate 117 and aspartate 136. Residues 128–148 (SFAIFNLADTFITLGAISILI) traverse the membrane as a helical segment.

It belongs to the peptidase A8 family.

It localises to the cell inner membrane. The enzyme catalyses Release of signal peptides from bacterial membrane prolipoproteins. Hydrolyzes -Xaa-Yaa-Zaa-|-(S,diacylglyceryl)Cys-, in which Xaa is hydrophobic (preferably Leu), and Yaa (Ala or Ser) and Zaa (Gly or Ala) have small, neutral side chains.. It functions in the pathway protein modification; lipoprotein biosynthesis (signal peptide cleavage). Its function is as follows. This protein specifically catalyzes the removal of signal peptides from prolipoproteins. This is Lipoprotein signal peptidase from Bartonella bacilliformis (strain ATCC 35685 / KC583 / Herrer 020/F12,63).